Here is a 151-residue protein sequence, read N- to C-terminus: Inactive oocyte-specific homeobox protein 2 (151 aa).

The tract at residues 1 to 97 is disordered; sequence MAEGPSLHPK…PMASRKFRKE (97 aa). The span at 37–54 shows a compositional bias: polar residues; that stretch reads MRQSPLVTPGSTTKSSLS.

It belongs to the paired homeobox family. Obox subfamily. In terms of tissue distribution, specifically expressed in oocytes and early embryos.

In contrast to other Obox family proteins, displays a truncated homeobox domain and does not bind DNA. The sequence is that of Inactive oocyte-specific homeobox protein 2 from Mus musculus (Mouse).